The following is a 346-amino-acid chain: Annexin A1 (346 aa).

A2 is subject to N-acetylalanine. The residue at position 5 (S5) is a Phosphoserine; by TRPM7. Q19 participates in a covalent cross-link: Isoglutamyl lysine isopeptide (Gln-Lys) (interchain with K-?). Residue Y21 is modified to Phosphotyrosine; by EGFR. At S27 the chain carries Phosphoserine; by PKC. Phosphoserine is present on residues S34 and S37. Annexin repeat units follow at residues 42–113, 114–185, 197–269, and 273–344; these read FNPS…AMLK, TPAQ…ALAK, DLAD…TIVK, and STPA…ALCG. Residue K58 is modified to N6-acetyllysine. Ca(2+) is bound by residues G59, V60, E62, K97, L100, E105, M127, G129, G131, T132, and E134. At T136 the chain carries Phosphothreonine. Positions 171, 210, and 213 each coordinate Ca(2+). K214 participates in a covalent cross-link: Glycyl lysine isopeptide (Lys-Gly) (interchain with G-Cter in SUMO1); alternate. A Glycyl lysine isopeptide (Lys-Gly) (interchain with G-Cter in SUMO2); alternate cross-link involves residue K214. 4 residues coordinate Ca(2+): G215, D253, E255, and L256. A Glycyl lysine isopeptide (Lys-Gly) (interchain with G-Cter in SUMO1) cross-link involves residue K257. Residues E261, M286, G288, and G290 each contribute to the Ca(2+) site. K312 is modified (N6-acetyllysine). A disulfide bridge connects residues C324 and C343. 3 residues coordinate Ca(2+): L328, E330, and T331. A Glycyl lysine isopeptide (Lys-Gly) (interchain with G-Cter in SUMO1) cross-link involves residue K332. Ca(2+) is bound at residue E336.

This sequence belongs to the annexin family. Homodimer; non-covalently linked. Homodimer; linked by transglutamylation. Homodimers linked by transglutamylation are observed in placenta, but not in other tissues. Interacts with S100A11. Heterotetramer, formed by two molecules each of S100A11 and ANXA1. Interacts with DYSF. Interacts with EGFR. Post-translationally, phosphorylated by protein kinase C, EGFR and TRPM7. Phosphorylated in response to EGF treatment. In terms of processing, sumoylated. Proteolytically cleaved by cathepsin CTSG to release the active N-terminal peptide Ac2-26. As to expression, detected in eosinophils. Detected in lung, placenta, spleen and thymus (at protein level).

It localises to the nucleus. It is found in the cytoplasm. Its subcellular location is the cell projection. The protein localises to the cilium. The protein resides in the basolateral cell membrane. It localises to the lateral cell membrane. It is found in the cell membrane. Its subcellular location is the apical cell membrane. The protein localises to the membrane. The protein resides in the endosome membrane. It localises to the secreted. It is found in the extracellular space. Its subcellular location is the early endosome. The protein localises to the cytoplasmic vesicle membrane. The protein resides in the extracellular exosome. It localises to the cytoplasmic vesicle. It is found in the secretory vesicle lumen. Its subcellular location is the phagocytic cup. In terms of biological role, plays important roles in the innate immune response as effector of glucocorticoid-mediated responses and regulator of the inflammatory process. Has anti-inflammatory activity. Plays a role in glucocorticoid-mediated down-regulation of the early phase of the inflammatory response. Contributes to the adaptive immune response by enhancing signaling cascades that are triggered by T-cell activation, regulates differentiation and proliferation of activated T-cells. Promotes the differentiation of T-cells into Th1 cells and negatively regulates differentiation into Th2 cells. Has no effect on unstimulated T-cells. Negatively regulates hormone exocytosis via activation of the formyl peptide receptors and reorganization of the actin cytoskeleton. Has high affinity for Ca(2+) and can bind up to eight Ca(2+) ions. Displays Ca(2+)-dependent binding to phospholipid membranes. Plays a role in the formation of phagocytic cups and phagosomes. Plays a role in phagocytosis by mediating the Ca(2+)-dependent interaction between phagosomes and the actin cytoskeleton. Functions at least in part by activating the formyl peptide receptors and downstream signaling cascades. Promotes chemotaxis of granulocytes and monocytes via activation of the formyl peptide receptors. Promotes rearrangement of the actin cytoskeleton, cell polarization and cell migration. Promotes resolution of inflammation and wound healing. Acts via neutrophil N-formyl peptide receptors to enhance the release of CXCL2. This is Annexin A1 (Anxa1) from Rattus norvegicus (Rat).